The sequence spans 411 residues: Tyrosine--tRNA ligase (411 aa).

Positions 50–59 match the 'HIGH' region motif; that stretch reads PTRPDLHLGH. Residues 236–240 carry the 'KMSKS' region motif; it reads KMSKS. Position 239 (lysine 239) interacts with ATP. The region spanning 345–409 is the S4 RNA-binding domain; that stretch reads VSMAKLVVLA…GKDKFARLVL (65 aa).

This sequence belongs to the class-I aminoacyl-tRNA synthetase family. TyrS type 2 subfamily. As to quaternary structure, homodimer.

Its subcellular location is the cytoplasm. It carries out the reaction tRNA(Tyr) + L-tyrosine + ATP = L-tyrosyl-tRNA(Tyr) + AMP + diphosphate + H(+). Catalyzes the attachment of tyrosine to tRNA(Tyr) in a two-step reaction: tyrosine is first activated by ATP to form Tyr-AMP and then transferred to the acceptor end of tRNA(Tyr). This Deinococcus radiodurans (strain ATCC 13939 / DSM 20539 / JCM 16871 / CCUG 27074 / LMG 4051 / NBRC 15346 / NCIMB 9279 / VKM B-1422 / R1) protein is Tyrosine--tRNA ligase.